A 252-amino-acid polypeptide reads, in one-letter code: Large ribosomal subunit protein uL4 (252 aa).

This sequence belongs to the universal ribosomal protein uL4 family. In terms of assembly, part of the 50S ribosomal subunit.

Its function is as follows. One of the primary rRNA binding proteins, this protein initially binds near the 5'-end of the 23S rRNA. It is important during the early stages of 50S assembly. It makes multiple contacts with different domains of the 23S rRNA in the assembled 50S subunit and ribosome. Functionally, forms part of the polypeptide exit tunnel. This Methanococcus maripaludis (strain DSM 14266 / JCM 13030 / NBRC 101832 / S2 / LL) protein is Large ribosomal subunit protein uL4.